A 2567-amino-acid chain; its full sequence is Highly reducing polyketide synthase sor1 (2567 aa).

Positions serine 14–aspartate 436 constitute a Ketosynthase family 3 (KS3) domain. Active-site for beta-ketoacyl synthase activity residues include cysteine 187, histidine 322, and histidine 359. The interval valine 550–leucine 841 is malonyl-CoA:ACP transacylase (MAT) domain. The segment at histidine 939–serine 1079 is N-terminal hotdog fold. The interval histidine 939–serine 1249 is dehydratase (DH) domain. The 314-residue stretch at histidine 939 to leucine 1252 folds into the PKS/mFAS DH domain. Histidine 971 functions as the Proton acceptor; for dehydratase activity in the catalytic mechanism. The tract at residues tyrosine 1095–leucine 1252 is C-terminal hotdog fold. Aspartate 1161 (proton donor; for dehydratase activity) is an active-site residue. A methyltransferase (CMet) domain region spans residues leucine 1426–leucine 1534. Residues phenylalanine 1852–leucine 2163 are enoyl reductase (ER) domain. A ketoreductase (KR) domain region spans residues alanine 2187–aspartate 2369. The 78-residue stretch at glutamate 2481–serine 2558 folds into the Carrier domain. An O-(pantetheine 4'-phosphoryl)serine modification is found at serine 2518.

It participates in secondary metabolite biosynthesis. In terms of biological role, highly reducing polyketide synthase; part of the SOR gene cluster that mediates the biosynthesis of sorbicillinoids, a diverse group of yellow secondary metabolites that restrict growth of competing pathogenic fungi but not of bacteria. Sorbicillinoids biosynthesis requires the action of two PKSs. The SOR cluster is required for the production of trichodimerol and dihydrotrichotetronin, with sor2 being sufficient for production of trichodimerol, but not dihydrotrichotetronin in the light. Sor1 iteratively combines three acetyl units and the growing chain is modified by the ketoacyl reductase subunit, and optional by the enoyl reductase subunit in the second cycle. The polyketide is then handed over to the PKS sor2, which adds three more acetyl units, and two methyl groups. Sor2 releases an aldehyde, which undergoes spontaneous cyclization resulting in the formation of sorbicillin or 2',3'-dihydrosorbicillin. The monooxygenase sor5 oxidizes sorbicillin and 2',3'-dihydrosorbicillin to 2',3'-dihydrosorbicillinol and sorbicillinol, respectively. The oxidoreductase sor8 further converts sorbicillinol into oxosorbicillinol. Sorbicillinol is the building block for the other sorbicillinoids such as disorbicillinol, bisvertinolon, dihydrobisvertinolone, and dihydrotrichotetronine. This is Highly reducing polyketide synthase sor1 from Hypocrea jecorina (strain QM6a) (Trichoderma reesei).